A 571-amino-acid polypeptide reads, in one-letter code: Isocitrate dehydrogenase kinase/phosphatase 2 (571 aa).

Residues 313–319 (APGTPGM) and Lys-334 each bind ATP. Asp-369 is an active-site residue.

Belongs to the AceK family.

The protein localises to the cytoplasm. It carries out the reaction L-seryl-[isocitrate dehydrogenase] + ATP = O-phospho-L-seryl-[isocitrate dehydrogenase] + ADP + H(+). In terms of biological role, bifunctional enzyme which can phosphorylate or dephosphorylate isocitrate dehydrogenase (IDH) on a specific serine residue. This is a regulatory mechanism which enables bacteria to bypass the Krebs cycle via the glyoxylate shunt in response to the source of carbon. When bacteria are grown on glucose, IDH is fully active and unphosphorylated, but when grown on acetate or ethanol, the activity of IDH declines drastically concomitant with its phosphorylation. This Pseudoalteromonas translucida (strain TAC 125) protein is Isocitrate dehydrogenase kinase/phosphatase 2.